A 397-amino-acid chain; its full sequence is Phosphoglycerate kinase (397 aa).

Residues Asp21–Asn23, Arg37, His60–Arg63, Arg119, and Arg152 each bind substrate. Residues Lys203, Gly294, Glu325, and Gly354–Ser357 each bind ATP.

This sequence belongs to the phosphoglycerate kinase family. As to quaternary structure, monomer.

Its subcellular location is the cytoplasm. It carries out the reaction (2R)-3-phosphoglycerate + ATP = (2R)-3-phospho-glyceroyl phosphate + ADP. Its pathway is carbohydrate degradation; glycolysis; pyruvate from D-glyceraldehyde 3-phosphate: step 2/5. This chain is Phosphoglycerate kinase, found in Chlorobium phaeovibrioides (strain DSM 265 / 1930) (Prosthecochloris vibrioformis (strain DSM 265)).